Here is a 342-residue protein sequence, read N- to C-terminus: Ketol-acid reductoisomerase (NADP(+)) (342 aa).

Residues 2 to 181 (VKVYYNGDIK…GGARAGVLET (180 aa)) form the KARI N-terminal Rossmann domain. NADP(+) contacts are provided by residues 25–28 (YGSQ), Arg48, Ser52, and 82–85 (DEQQ). His107 is a catalytic residue. Gly133 lines the NADP(+) pocket. The KARI C-terminal knotted domain occupies 182–327 (TFKEETETDL…RKLREMMPFV (146 aa)). The Mg(2+) site is built by Asp190, Glu194, Glu226, and Glu230. Substrate is bound at residue Ser251.

The protein belongs to the ketol-acid reductoisomerase family. Mg(2+) is required as a cofactor.

The enzyme catalyses (2R)-2,3-dihydroxy-3-methylbutanoate + NADP(+) = (2S)-2-acetolactate + NADPH + H(+). The catalysed reaction is (2R,3R)-2,3-dihydroxy-3-methylpentanoate + NADP(+) = (S)-2-ethyl-2-hydroxy-3-oxobutanoate + NADPH + H(+). Its pathway is amino-acid biosynthesis; L-isoleucine biosynthesis; L-isoleucine from 2-oxobutanoate: step 2/4. It participates in amino-acid biosynthesis; L-valine biosynthesis; L-valine from pyruvate: step 2/4. Functionally, involved in the biosynthesis of branched-chain amino acids (BCAA). Catalyzes an alkyl-migration followed by a ketol-acid reduction of (S)-2-acetolactate (S2AL) to yield (R)-2,3-dihydroxy-isovalerate. In the isomerase reaction, S2AL is rearranged via a Mg-dependent methyl migration to produce 3-hydroxy-3-methyl-2-ketobutyrate (HMKB). In the reductase reaction, this 2-ketoacid undergoes a metal-dependent reduction by NADPH to yield (R)-2,3-dihydroxy-isovalerate. In Bacillus licheniformis (strain ATCC 14580 / DSM 13 / JCM 2505 / CCUG 7422 / NBRC 12200 / NCIMB 9375 / NCTC 10341 / NRRL NRS-1264 / Gibson 46), this protein is Ketol-acid reductoisomerase (NADP(+)).